Reading from the N-terminus, the 828-residue chain is Putative dual specificity tyrosine-phosphorylation-regulated kinase 3 homolog (828 aa).

The span at 1 to 14 (MVGSQEKKNNHIEL) shows a compositional bias: basic and acidic residues. The segment at 1–26 (MVGSQEKKNNHIELSETPATDKNNLN) is disordered. The segment covering 17–26 (TPATDKNNLN) has biased composition (polar residues). The 314-residue stretch at 276 to 589 (YEMLKIIGKG…PSEALKHPWL (314 aa)) folds into the Protein kinase domain. ATP is bound by residues 282–290 (IGKGSFGQV) and Lys305. Residue Asp402 is the Proton acceptor of the active site. The residue at position 616 (Ser616) is a Phosphoserine.

Belongs to the protein kinase superfamily. CMGC Ser/Thr protein kinase family. MNB/DYRK subfamily. Autophosphorylated on tyrosine residues.

It catalyses the reaction L-seryl-[protein] + ATP = O-phospho-L-seryl-[protein] + ADP + H(+). The catalysed reaction is L-threonyl-[protein] + ATP = O-phospho-L-threonyl-[protein] + ADP + H(+). The enzyme catalyses L-tyrosyl-[protein] + ATP = O-phospho-L-tyrosyl-[protein] + ADP + H(+). In Drosophila melanogaster (Fruit fly), this protein is Putative dual specificity tyrosine-phosphorylation-regulated kinase 3 homolog (Dyrk3).